Reading from the N-terminus, the 214-residue chain is N-(5'-phosphoribosyl)anthranilate isomerase (214 aa).

The protein belongs to the TrpF family.

The catalysed reaction is N-(5-phospho-beta-D-ribosyl)anthranilate = 1-(2-carboxyphenylamino)-1-deoxy-D-ribulose 5-phosphate. It participates in amino-acid biosynthesis; L-tryptophan biosynthesis; L-tryptophan from chorismate: step 3/5. The protein is N-(5'-phosphoribosyl)anthranilate isomerase of Halorubrum lacusprofundi (strain ATCC 49239 / DSM 5036 / JCM 8891 / ACAM 34).